Here is a 319-residue protein sequence, read N- to C-terminus: Lipoyl synthase (319 aa).

Residues cysteine 61, cysteine 66, cysteine 72, cysteine 87, cysteine 91, cysteine 94, and serine 300 each coordinate [4Fe-4S] cluster. Residues 73-289 (WDKKHATFMI…ESVAYSKGFL (217 aa)) enclose the Radical SAM core domain.

Belongs to the radical SAM superfamily. Lipoyl synthase family. It depends on [4Fe-4S] cluster as a cofactor.

The protein localises to the cytoplasm. The catalysed reaction is [[Fe-S] cluster scaffold protein carrying a second [4Fe-4S](2+) cluster] + N(6)-octanoyl-L-lysyl-[protein] + 2 oxidized [2Fe-2S]-[ferredoxin] + 2 S-adenosyl-L-methionine + 4 H(+) = [[Fe-S] cluster scaffold protein] + N(6)-[(R)-dihydrolipoyl]-L-lysyl-[protein] + 4 Fe(3+) + 2 hydrogen sulfide + 2 5'-deoxyadenosine + 2 L-methionine + 2 reduced [2Fe-2S]-[ferredoxin]. It functions in the pathway protein modification; protein lipoylation via endogenous pathway; protein N(6)-(lipoyl)lysine from octanoyl-[acyl-carrier-protein]: step 2/2. Catalyzes the radical-mediated insertion of two sulfur atoms into the C-6 and C-8 positions of the octanoyl moiety bound to the lipoyl domains of lipoate-dependent enzymes, thereby converting the octanoylated domains into lipoylated derivatives. In Rhodopseudomonas palustris (strain BisB18), this protein is Lipoyl synthase.